Consider the following 228-residue polypeptide: 5'-methylthioadenosine/S-adenosylhomocysteine nucleosidase (228 aa).

The active-site Proton acceptor is E11. Substrate is bound by residues G77, I151, and 172-173 (ME). D196 acts as the Proton donor in catalysis.

The protein belongs to the PNP/UDP phosphorylase family. MtnN subfamily.

The enzyme catalyses S-adenosyl-L-homocysteine + H2O = S-(5-deoxy-D-ribos-5-yl)-L-homocysteine + adenine. It catalyses the reaction S-methyl-5'-thioadenosine + H2O = 5-(methylsulfanyl)-D-ribose + adenine. It carries out the reaction 5'-deoxyadenosine + H2O = 5-deoxy-D-ribose + adenine. Its pathway is amino-acid biosynthesis; L-methionine biosynthesis via salvage pathway; S-methyl-5-thio-alpha-D-ribose 1-phosphate from S-methyl-5'-thioadenosine (hydrolase route): step 1/2. Its function is as follows. Catalyzes the irreversible cleavage of the glycosidic bond in both 5'-methylthioadenosine (MTA) and S-adenosylhomocysteine (SAH/AdoHcy) to adenine and the corresponding thioribose, 5'-methylthioribose and S-ribosylhomocysteine, respectively. Also cleaves 5'-deoxyadenosine, a toxic by-product of radical S-adenosylmethionine (SAM) enzymes, into 5-deoxyribose and adenine. The sequence is that of 5'-methylthioadenosine/S-adenosylhomocysteine nucleosidase from Staphylococcus carnosus (strain TM300).